The primary structure comprises 227 residues: Phosphoglycolate phosphatase (227 aa).

Catalysis depends on Asp9, which acts as the Nucleophile. Mg(2+)-binding residues include Asp9, Asp11, and Asp171.

The protein belongs to the HAD-like hydrolase superfamily. CbbY/CbbZ/Gph/YieH family. It depends on Mg(2+) as a cofactor.

It catalyses the reaction 2-phosphoglycolate + H2O = glycolate + phosphate. The protein operates within organic acid metabolism; glycolate biosynthesis; glycolate from 2-phosphoglycolate: step 1/1. Its function is as follows. Specifically catalyzes the dephosphorylation of 2-phosphoglycolate. Is involved in the dissimilation of the intracellular 2-phosphoglycolate formed during the DNA repair of 3'-phosphoglycolate ends, a major class of DNA lesions induced by oxidative stress. The sequence is that of Phosphoglycolate phosphatase from Mesorhizobium japonicum (strain LMG 29417 / CECT 9101 / MAFF 303099) (Mesorhizobium loti (strain MAFF 303099)).